Reading from the N-terminus, the 399-residue chain is MAATTAAVVAEEDTELRDLLVQTLENSGVLNRIKAELRAAVFLALEEQEKVENKTPLVNENLKKFLNTKDGRLVASLVAEFLQFFNLDFTLAVFHPETSTIQGLEGRENLAQDLGIIEAEGTVGGPLLLEVIRRCQQKEKGPASVEGALDLSDGHPPSKSPEGKSSANSTPSKIPRYKGQGKKKTIGQKPGDKKTSSETSQSEPSVSLSESKSKSSLHSLAHETRIASFLSSSAVDARDSSALCPDGDDVEGDSFFDDPIPKPEKTYGWRAEPRKQVGGLASLSDKPHLRSGLSSLAGAPSLTDPESKRGSTVLKDLKLVGEKIGSLGLGTGEDEDYADDFNSASHRSEKSELSIGEEIEEDLSMGVEDGNTSDKLDDLTQDLTVSQLSDVADYLEDVA.

The region spanning 70–102 (DGRLVASLVAEFLQFFNLDFTLAVFHPETSTIQ) is the LisH domain. Disordered stretches follow at residues 142–216 (PASV…SKSS) and 236–311 (DARD…KRGS). Phosphoserine occurs at positions 152 and 160. Positions 163–172 (GKSSANSTPS) are enriched in polar residues. The residue at position 170 (T170) is a Phosphothreonine. Positions 175–186 (PRYKGQGKKKTI) are enriched in basic residues. Positions 197–216 (SETSQSEPSVSLSESKSKSS) are enriched in low complexity. The residue at position 202 (S202) is a Phosphoserine. Positions 246–256 (DGDDVEGDSFF) are enriched in acidic residues. Residues 259–275 (PIPKPEKTYGWRAEPRK) are compositionally biased toward basic and acidic residues. The span at 290–302 (RSGLSSLAGAPSL) shows a compositional bias: low complexity. A phosphoserine mark is found at S301 and S326. The segment at 328–354 (GLGTGEDEDYADDFNSASHRSEKSELS) is disordered. Y337 is modified (phosphotyrosine).

Belongs to the CEP43 family. Homodimer. Part of a ternary complex that contains CEP350, CEP43 and MAPRE1. Interacts directly with CEP350 and MAPRE1. Interacts with CEP19. Interacts (via N-terminus) with CEP350 (via C-terminus).

The protein resides in the cytoplasm. The protein localises to the cytoskeleton. It localises to the microtubule organizing center. It is found in the centrosome. Its subcellular location is the centriole. The protein resides in the cilium basal body. Its function is as follows. Required for anchoring microtubules to the centrosomes. Required for ciliation. The chain is Centrosomal protein 43 from Mus musculus (Mouse).